Here is a 562-residue protein sequence, read N- to C-terminus: Potassium-transporting ATPase potassium-binding subunit (562 aa).

Helical transmembrane passes span 6–26, 62–82, 132–152, 175–195, 253–273, 283–303, 327–347, 356–376, 379–399, 416–436, 483–503, and 526–546; these read FLLI…LGGF, YALA…VLLM, GLTV…FALI, LYVL…QGVL, FVQM…FGQV, LIWA…YAEL, FGIL…CGAV, ALGG…FGGV, GLYG…LMIG, MTAL…ALAL, LLLA…VLAI, and LFIG…FIPA.

The protein belongs to the KdpA family. As to quaternary structure, the system is composed of three essential subunits: KdpA, KdpB and KdpC.

The protein localises to the cell inner membrane. Part of the high-affinity ATP-driven potassium transport (or Kdp) system, which catalyzes the hydrolysis of ATP coupled with the electrogenic transport of potassium into the cytoplasm. This subunit binds the periplasmic potassium ions and delivers the ions to the membrane domain of KdpB through an intramembrane tunnel. This Yersinia pseudotuberculosis serotype I (strain IP32953) protein is Potassium-transporting ATPase potassium-binding subunit.